The chain runs to 130 residues: Small ribosomal subunit protein uS11 (130 aa).

This sequence belongs to the universal ribosomal protein uS11 family. In terms of assembly, part of the 30S ribosomal subunit. Interacts with proteins S7 and S18. Binds to IF-3.

Located on the platform of the 30S subunit, it bridges several disparate RNA helices of the 16S rRNA. Forms part of the Shine-Dalgarno cleft in the 70S ribosome. This Gluconobacter oxydans (strain 621H) (Gluconobacter suboxydans) protein is Small ribosomal subunit protein uS11.